We begin with the raw amino-acid sequence, 212 residues long: Ribosomal RNA small subunit methyltransferase G (212 aa).

S-adenosyl-L-methionine is bound by residues glycine 80, leucine 85, 131–132 (AE), and arginine 146.

The protein belongs to the methyltransferase superfamily. RNA methyltransferase RsmG family.

Its subcellular location is the cytoplasm. It catalyses the reaction guanosine(527) in 16S rRNA + S-adenosyl-L-methionine = N(7)-methylguanosine(527) in 16S rRNA + S-adenosyl-L-homocysteine. In terms of biological role, specifically methylates the N7 position of guanine in position 527 of 16S rRNA. This is Ribosomal RNA small subunit methyltransferase G from Xylella fastidiosa (strain M23).